Here is a 508-residue protein sequence, read N- to C-terminus: Probable ligand-gated ion channel 46 (508 aa).

Residues 1-18 (MQYLQFLSLVVLLLMCHA) form the signal peptide. Topologically, residues 19–274 (RKSVYRRNSP…FEFKRRAGWY (256 aa)) are extracellular. Asparagine 65, asparagine 134, asparagine 175, and asparagine 201 each carry an N-linked (GlcNAc...) asparagine glycan. A disulfide bridge connects residues cysteine 190 and cysteine 204. The chain crosses the membrane as a helical span at residues 275–295 (ILQAYLPTYLTICISWISFAL). Residues 296-301 (GSKAIP) are Cytoplasmic-facing. A helical transmembrane segment spans residues 302–321 (ARTMLGVNSLLAMTFQFGNI). Residues 322-335 (IRNLPRVSYVKAID) are Extracellular-facing. Residues 336-356 (VWMLSCMTFVFCSLLELAWVG) traverse the membrane as a helical segment. Residues 357–480 (YLSREEEPTS…KQRREILAHK (124 aa)) are Cytoplasmic-facing. Positions 374 to 407 (AQVAPKPCHPPPVQQNANNSSVHRRQKQPKNEEE) are disordered. The helical transmembrane segment at 481–501 (IDSVSVFMFPFLFVLFNIAYW) threads the bilayer. The Extracellular segment spans residues 502–508 (QHYLRGY).

The protein belongs to the ligand-gated ion channel (TC 1.A.9) family. In terms of tissue distribution, expressed in the nervous system, with high expression in cholinergic motor neurons and weak expression in GABAergic motor neurons.

It is found in the presynaptic cell membrane. Its subcellular location is the cell projection. The protein localises to the axon. The protein resides in the cytoplasmic vesicle. It localises to the secretory vesicle. It is found in the synaptic vesicle. Functionally, probable component of a ligand-gated anion channel. Negatively regulates synaptic transmission and synaptic vesicle release in response to acetylcholine in cholinergic motor neurons. Role in synaptic vesicle release kinetics may be in association with the ligand-gated ion channel protein acc-4. The chain is Probable ligand-gated ion channel 46 from Caenorhabditis elegans.